The following is a 488-amino-acid chain: MRALVSRTPIAAALRSATLGSQCASIQYNSLNILDRLPQPLPSRSFRIRYTGVSTSGRVTQTCRRSFQLSASSRDKRGPQSAEPDPLERLEVKKVQQQHENEKDDSGRDTKSGGKVAKAMTKGDTIAGKLLTTPSRLFKLLIPLTTINRKDIEQIAILIHPQQPLSHLERLIQSEVPPIEDENGQKRPPAVSFIALQLEQDAIRPKRGMYEGTDAEIHRVEGGKDDATVAKRGEDFQEVDETFSYLRRPGPGQGDKEQRFIRWSQSTEIGDFIRDAARAKEFIVTIEGAPAGLEQIHVAVPSFDERTYFLRMRLRKISRRIQGLAEIKHECDALAHRGAQRVALGGFGILAFWWYIVYKLTFETDLGWDTMEPVTYLVSLSTLMGGYLWFLYHNREISYRSALDFTINARQKKLYQMKGIDLQVWESLIDEANAIRREIKNIAAEYDVDWDERKDEQDDRVTEALKKERRLKNGSQKEERPKDDRDDD.

The transit peptide at 1–74 directs the protein to the mitochondrion; sequence MRALVSRTPI…RSFQLSASSR (74 aa). The disordered stretch occupies residues 65–117; sequence RSFQLSASSRDKRGPQSAEPDPLERLEVKKVQQQHENEKDDSGRDTKSGGKVA. Residues 75–339 lie on the Mitochondrial matrix side of the membrane; it reads DKRGPQSAEP…ECDALAHRGA (265 aa). Basic and acidic residues predominate over residues 86 to 112; it reads PLERLEVKKVQQQHENEKDDSGRDTKS. A helical transmembrane segment spans residues 340-361; that stretch reads QRVALGGFGILAFWWYIVYKLT. At 362–370 the chain is on the mitochondrial intermembrane side; that stretch reads FETDLGWDT. Residues 368-376 carry the Selectivity filter motif; that stretch reads WDTMEPVTY. Residues 371 to 391 form a helical membrane-spanning segment; that stretch reads MEPVTYLVSLSTLMGGYLWFL. Residue Glu372 participates in Ca(2+) binding. Topologically, residues 392–488 are mitochondrial matrix; it reads YHNREISYRS…ERPKDDRDDD (97 aa). Positions 464-488 are disordered; sequence ALKKERRLKNGSQKEERPKDDRDDD. Basic and acidic residues predominate over residues 475–488; that stretch reads SQKEERPKDDRDDD.

The protein belongs to the MCU (TC 1.A.77) family. In terms of assembly, homotetramer, assembles in a dimer or dimers configuration with two interfaces.

Its subcellular location is the mitochondrion inner membrane. It carries out the reaction Ca(2+)(in) = Ca(2+)(out). Inhibited by ruthenium red or its derivative Ru360. Its function is as follows. Highly selective calcium channel localized to the inner mitochondrial membrane, which mediates calcium uptake into the mitochondrial matrix. Mitochondrial calcium homeostasis plays key roles in cellular physiology and regulates ATP production, cytoplasmic calcium signals and activation of cell death pathways. Sufficient to operate as a pore-forming channel without the need of calcium-sensor or auxiliary subunit. The polypeptide is Calcium uniporter protein, mitochondrial (Neosartorya fischeri (strain ATCC 1020 / DSM 3700 / CBS 544.65 / FGSC A1164 / JCM 1740 / NRRL 181 / WB 181) (Aspergillus fischerianus)).